Consider the following 132-residue polypeptide: Small ribosomal subunit protein uS9 (132 aa).

It belongs to the universal ribosomal protein uS9 family.

This Mycoplasma genitalium (strain ATCC 33530 / DSM 19775 / NCTC 10195 / G37) (Mycoplasmoides genitalium) protein is Small ribosomal subunit protein uS9 (rpsI).